Here is a 612-residue protein sequence, read N- to C-terminus: Dihydroxy-acid dehydratase (612 aa).

A Mg(2+)-binding site is contributed by aspartate 81. Cysteine 122 contributes to the [2Fe-2S] cluster binding site. 2 residues coordinate Mg(2+): aspartate 123 and lysine 124. Lysine 124 is modified (N6-carboxylysine). Residue cysteine 193 coordinates [2Fe-2S] cluster. Mg(2+) is bound at residue glutamate 489. Serine 515 (proton acceptor) is an active-site residue.

Belongs to the IlvD/Edd family. As to quaternary structure, homodimer. [2Fe-2S] cluster serves as cofactor. Mg(2+) is required as a cofactor.

The enzyme catalyses (2R)-2,3-dihydroxy-3-methylbutanoate = 3-methyl-2-oxobutanoate + H2O. It carries out the reaction (2R,3R)-2,3-dihydroxy-3-methylpentanoate = (S)-3-methyl-2-oxopentanoate + H2O. Its pathway is amino-acid biosynthesis; L-isoleucine biosynthesis; L-isoleucine from 2-oxobutanoate: step 3/4. The protein operates within amino-acid biosynthesis; L-valine biosynthesis; L-valine from pyruvate: step 3/4. Functions in the biosynthesis of branched-chain amino acids. Catalyzes the dehydration of (2R,3R)-2,3-dihydroxy-3-methylpentanoate (2,3-dihydroxy-3-methylvalerate) into 2-oxo-3-methylpentanoate (2-oxo-3-methylvalerate) and of (2R)-2,3-dihydroxy-3-methylbutanoate (2,3-dihydroxyisovalerate) into 2-oxo-3-methylbutanoate (2-oxoisovalerate), the penultimate precursor to L-isoleucine and L-valine, respectively. The polypeptide is Dihydroxy-acid dehydratase (Stenotrophomonas maltophilia (strain K279a)).